Here is a 172-residue protein sequence, read N- to C-terminus: Small ribosomal subunit protein uS5 (172 aa).

The region spanning 17–80 (LREKMISVNR…DEARRKMVKV (64 aa)) is the S5 DRBM domain.

It belongs to the universal ribosomal protein uS5 family. As to quaternary structure, part of the 30S ribosomal subunit. Contacts proteins S4 and S8.

Its function is as follows. With S4 and S12 plays an important role in translational accuracy. Located at the back of the 30S subunit body where it stabilizes the conformation of the head with respect to the body. The polypeptide is Small ribosomal subunit protein uS5 (Cupriavidus metallidurans (strain ATCC 43123 / DSM 2839 / NBRC 102507 / CH34) (Ralstonia metallidurans)).